A 375-amino-acid chain; its full sequence is uncharacterized protein (375 aa).

A GP-PDE domain is found at valine 52–serine 301.

This is an uncharacterized protein from Sinorhizobium fredii (strain NBRC 101917 / NGR234).